The primary structure comprises 220 residues: Histone deacetylase complex subunit SAP30 (220 aa).

An interaction with NCOR1 region spans residues 1–129 (MNGFTPEEMS…QSVRNRRKRK (129 aa)). Threonine 5 is subject to Phosphothreonine. The Atypical zinc finger occupies 67–115 (CCLREDGERCGRAAGNASFSKRIQKSISQKKVKIELDKSARHLYICDYH). Lysine 87 is covalently cross-linked (Glycyl lysine isopeptide (Lys-Gly) (interchain with G-Cter in SUMO2)). A disordered region spans residues 123 to 143 (RNRRKRKGSDDDGGDSPVQDI). Residues 130–220 (GSDDDGGDSP…SDLKADSGVH (91 aa)) are interaction with SIN3A. 2 positions are modified to phosphoserine: serine 131 and serine 138. Threonine 145 carries the phosphothreonine modification. Residues lysine 194 and lysine 214 each participate in a glycyl lysine isopeptide (Lys-Gly) (interchain with G-Cter in SUMO2) cross-link.

This sequence belongs to the SAP30 family. Component of the histone deacetylase complex that includes at least SIN3A, HDAC1 and HDAC2. Found in a complex composed of at least SINHCAF, SIN3A, HDAC1, SAP30, RBBP4, OGT and TET1. Interacts with HDAC1. Interacts with SIN3A, SIN3B, HDAC2, RBBP4 and NCOR1. Interacts directly with SAMSN1. Interacts with HCFC1. Interacts with SAP30BP.

The protein localises to the nucleus. Its function is as follows. Involved in the functional recruitment of the Sin3-histone deacetylase complex (HDAC) to a specific subset of N-CoR corepressor complexes. Capable of transcription repression by N-CoR. Active in deacetylating core histone octamers (when in a complex) but inactive in deacetylating nucleosomal histones. The chain is Histone deacetylase complex subunit SAP30 from Mus musculus (Mouse).